We begin with the raw amino-acid sequence, 428 residues long: Sulfhydrogenase 1 subunit alpha (428 aa).

Ni(2+) is bound by residues Cys65, Cys68, Cys418, and Cys421. Cys68 is a Fe cation binding site. Cys421 is a Fe cation binding site.

The protein belongs to the [NiFe]/[NiFeSe] hydrogenase large subunit family. Heterotetramer of alpha, beta, gamma and delta subunits. The nickel-containing alpha and delta subunits constitute the hydrogenase activity. The beta and gamma subunits (flavin-containing dimer) constitute the sulfur reductase activity. Ni(2+) serves as cofactor. Fe cation is required as a cofactor.

It is found in the cytoplasm. It catalyses the reaction H2 + NADP(+) = NADPH + H(+). In terms of biological role, part of a bifunctional enzyme complex that functions as an NADPH-dependent hydrogen-evolving hydrogenase with sulfur-reducing activity. May play a role in hydrogen cycling during fermentative growth. Activity not exhibited with NAD. The alpha and delta subunits form the hydrogenase component that catalyzes the reduction of protons to evolve hydrogen. This Pyrococcus furiosus (strain ATCC 43587 / DSM 3638 / JCM 8422 / Vc1) protein is Sulfhydrogenase 1 subunit alpha.